The chain runs to 2210 residues: Filamin-A (2210 aa).

2 consecutive Calponin-homology (CH) domains span residues 15 to 120 and 139 to 242; these read KIQQ…LHYS and HTPK…NSKL. 20 Filamin repeats span residues 249–347, 349–447, 448–544, 545–635, 638–734, 735–831, 832–929, 930–1022, 1023–1121, 1122–1217, 1218–1312, 1322–1423, 1424–1515, 1516–1603, 1606–1698, 1699–1796, 1799–1891, 1893–1986, 1988–2079, and 2116–2210; these read RPKT…PVKV, GHAG…PVKV, APLS…EVKV, GPKK…IAQI, RTDF…RVYV, GVPV…VVVE, QTVD…VVNV, KSGC…RVLV, EETV…VMTV, FPKS…KLEA, FPTG…SIKA, SEYI…KFHV, DSIT…FAKI, TGEG…KVTV, REVG…TVKV, AGEG…QFTV, LRDS…KVYV, PDAG…RIKV, KDVA…KVNA, and TFKS…QIDV.

Belongs to the filamin family. As to quaternary structure, interacts with Ten-m. As to expression, germline-specific in females (at protein level). Expressed in ovary.

It localises to the cytoplasm. Its subcellular location is the cytoskeleton. It is found in the cell membrane. Its function is as follows. Involved in the germline ring canal formation. May tether actin microfilament within the ovarian ring canal to the cell membrane. Contributes to actin microfilaments organization. This is Filamin-A (cher) from Drosophila melanogaster (Fruit fly).